We begin with the raw amino-acid sequence, 100 residues long: Urease subunit gamma (100 aa).

Belongs to the urease gamma subunit family. In terms of assembly, heterotrimer of UreA (gamma), UreB (beta) and UreC (alpha) subunits. Three heterotrimers associate to form the active enzyme.

The protein localises to the cytoplasm. It catalyses the reaction urea + 2 H2O + H(+) = hydrogencarbonate + 2 NH4(+). The protein operates within nitrogen metabolism; urea degradation; CO(2) and NH(3) from urea (urease route): step 1/1. This chain is Urease subunit gamma, found in Herpetosiphon aurantiacus (strain ATCC 23779 / DSM 785 / 114-95).